A 234-amino-acid chain; its full sequence is GTP cyclohydrolase 1 (234 aa).

A disordered region spans residues 1-26 (MDALIKPLRAGKPDAKPADPKGTEFR). The segment covering 11–26 (GKPDAKPADPKGTEFR) has biased composition (basic and acidic residues). Residues Cys-123, His-126, and Cys-194 each contribute to the Zn(2+) site.

Belongs to the GTP cyclohydrolase I family. Toroid-shaped homodecamer, composed of two pentamers of five dimers.

It catalyses the reaction GTP + H2O = 7,8-dihydroneopterin 3'-triphosphate + formate + H(+). It participates in cofactor biosynthesis; 7,8-dihydroneopterin triphosphate biosynthesis; 7,8-dihydroneopterin triphosphate from GTP: step 1/1. This chain is GTP cyclohydrolase 1, found in Rhodopseudomonas palustris (strain BisB18).